The primary structure comprises 219 residues: Ras-related protein RABA5d (219 aa).

S2 carries the post-translational modification N-acetylserine. 19–26 provides a ligand contact to GTP; that stretch reads GDSAVGKS. Residues 41-49 carry the Effector region motif; the sequence is SKATIGVEF. GTP-binding positions include 67-71, 125-128, and 155-156; these read DTAGQ, NKCD, and SA. 2 S-geranylgeranyl cysteine lipidation sites follow: C215 and C216.

This sequence belongs to the small GTPase superfamily. Rab family.

The protein resides in the cell membrane. Functionally, intracellular vesicle trafficking and protein transport. This Arabidopsis thaliana (Mouse-ear cress) protein is Ras-related protein RABA5d (RABA5D).